The following is a 194-amino-acid chain: ATP-dependent Clp protease proteolytic subunit (194 aa).

The Nucleophile role is filled by S98. H123 is an active-site residue.

Belongs to the peptidase S14 family. As to quaternary structure, fourteen ClpP subunits assemble into 2 heptameric rings which stack back to back to give a disk-like structure with a central cavity, resembling the structure of eukaryotic proteasomes.

It localises to the cytoplasm. The catalysed reaction is Hydrolysis of proteins to small peptides in the presence of ATP and magnesium. alpha-casein is the usual test substrate. In the absence of ATP, only oligopeptides shorter than five residues are hydrolyzed (such as succinyl-Leu-Tyr-|-NHMec, and Leu-Tyr-Leu-|-Tyr-Trp, in which cleavage of the -Tyr-|-Leu- and -Tyr-|-Trp bonds also occurs).. In terms of biological role, cleaves peptides in various proteins in a process that requires ATP hydrolysis. Has a chymotrypsin-like activity. Plays a major role in the degradation of misfolded proteins. This chain is ATP-dependent Clp protease proteolytic subunit, found in Syntrophus aciditrophicus (strain SB).